The chain runs to 164 residues: I-Kappa-B like protein F1 (164 aa).

ANK repeat units follow at residues 57–89 (HGRQCIHTVAWHDRANAVMKIEILMQSGVNINA), 94–124 (TGNTLLHIAASTGNYLLADWFCQQLGVDLGA), and 128–157 (QQETAYYIAYKMRDRKMMKLLRAHGVAYNN).

This sequence belongs to the polydnaviridae I-Kappa-B-like protein family.

Its function is as follows. Suppresses the host immune response through NF-kappa-B inactivation. Possesses ankyrin repeat domains required for NF-kappa-B binding but lacks the regulatory regions required for dissociation from NF-kappa-B and degradation. Therefore, prevents host NF-kappa-B release and subsequent activation. This Microplitis demolitor bracovirus (isolate Webb) (MdBV) protein is I-Kappa-B like protein F1 (F2).